The sequence spans 93 residues: MADITDIKTILYTEKSLNLQEQGVVVIQTSPKMTKTGLKAVLKEYFGVTPKSINSLRMDGKVKRFRGRLGQRNDYKKFYVKLPEGVSLENAEA.

It belongs to the universal ribosomal protein uL23 family. Part of the 50S ribosomal subunit. Contacts protein L29, and trigger factor when it is bound to the ribosome.

Functionally, one of the early assembly proteins it binds 23S rRNA. One of the proteins that surrounds the polypeptide exit tunnel on the outside of the ribosome. Forms the main docking site for trigger factor binding to the ribosome. The sequence is that of Large ribosomal subunit protein uL23 from Campylobacter jejuni subsp. doylei (strain ATCC BAA-1458 / RM4099 / 269.97).